The following is an 89-amino-acid chain: Small ribosomal subunit protein uS15 (89 aa).

It belongs to the universal ribosomal protein uS15 family. Part of the 30S ribosomal subunit. Forms a bridge to the 50S subunit in the 70S ribosome, contacting the 23S rRNA.

Its function is as follows. One of the primary rRNA binding proteins, it binds directly to 16S rRNA where it helps nucleate assembly of the platform of the 30S subunit by binding and bridging several RNA helices of the 16S rRNA. Forms an intersubunit bridge (bridge B4) with the 23S rRNA of the 50S subunit in the ribosome. The sequence is that of Small ribosomal subunit protein uS15 from Polynucleobacter asymbioticus (strain DSM 18221 / CIP 109841 / QLW-P1DMWA-1) (Polynucleobacter necessarius subsp. asymbioticus).